Here is a 261-residue protein sequence, read N- to C-terminus: Cytochrome c oxidase subunit 3 (261 aa).

The Mitochondrial matrix segment spans residues M1–P15. The helical transmembrane segment at W16–W34 threads the bilayer. Over F35 to M40 the chain is Mitochondrial intermembrane. Residues L41–T66 form a helical membrane-spanning segment. The Mitochondrial matrix segment spans residues F67–T72. A helical transmembrane segment spans residues S73–S105. Topologically, residues L106 to E128 are mitochondrial intermembrane. A helical membrane pass occupies residues V129–M152. Residues E153 to D155 lie on the Mitochondrial matrix side of the membrane. Residues R156–E183 form a helical membrane-spanning segment. The Mitochondrial intermembrane segment spans residues A184 to D190. A helical transmembrane segment spans residues G191–L223. Topologically, residues K224–H232 are mitochondrial matrix. A helical transmembrane segment spans residues F233–I256. The Mitochondrial intermembrane portion of the chain corresponds to Y257–S261.

Belongs to the cytochrome c oxidase subunit 3 family. In terms of assembly, component of the cytochrome c oxidase (complex IV, CIV), a multisubunit enzyme composed of 14 subunits. The complex is composed of a catalytic core of 3 subunits MT-CO1, MT-CO2 and MT-CO3, encoded in the mitochondrial DNA, and 11 supernumerary subunits COX4I, COX5A, COX5B, COX6A, COX6B, COX6C, COX7A, COX7B, COX7C, COX8 and NDUFA4, which are encoded in the nuclear genome. The complex exists as a monomer or a dimer and forms supercomplexes (SCs) in the inner mitochondrial membrane with NADH-ubiquinone oxidoreductase (complex I, CI) and ubiquinol-cytochrome c oxidoreductase (cytochrome b-c1 complex, complex III, CIII), resulting in different assemblies (supercomplex SCI(1)III(2)IV(1) and megacomplex MCI(2)III(2)IV(2)).

It is found in the mitochondrion inner membrane. The catalysed reaction is 4 Fe(II)-[cytochrome c] + O2 + 8 H(+)(in) = 4 Fe(III)-[cytochrome c] + 2 H2O + 4 H(+)(out). Its function is as follows. Component of the cytochrome c oxidase, the last enzyme in the mitochondrial electron transport chain which drives oxidative phosphorylation. The respiratory chain contains 3 multisubunit complexes succinate dehydrogenase (complex II, CII), ubiquinol-cytochrome c oxidoreductase (cytochrome b-c1 complex, complex III, CIII) and cytochrome c oxidase (complex IV, CIV), that cooperate to transfer electrons derived from NADH and succinate to molecular oxygen, creating an electrochemical gradient over the inner membrane that drives transmembrane transport and the ATP synthase. Cytochrome c oxidase is the component of the respiratory chain that catalyzes the reduction of oxygen to water. Electrons originating from reduced cytochrome c in the intermembrane space (IMS) are transferred via the dinuclear copper A center (CU(A)) of subunit 2 and heme A of subunit 1 to the active site in subunit 1, a binuclear center (BNC) formed by heme A3 and copper B (CU(B)). The BNC reduces molecular oxygen to 2 water molecules using 4 electrons from cytochrome c in the IMS and 4 protons from the mitochondrial matrix. The chain is Cytochrome c oxidase subunit 3 (MT-CO3) from Sus scrofa (Pig).